The following is an 84-amino-acid chain: MTNLSDIIEKETGKQLVIQESILMLPEEVEEVIGNKPESDILVHTAYDESTDENVMLLTSDAPEYKPWALVIQDSNGENKIKML.

In terms of biological role, this protein binds specifically and reversibly to the host uracil-DNA glycosylase, preventing removal of uracil residues from PBS2 DNA by the host uracil-excision repair system. The chain is Uracil-DNA glycosylase inhibitor (UGI) from Bacillus subtilis (Bacteriophage PBS2).